A 37-amino-acid polypeptide reads, in one-letter code: Large ribosomal subunit protein bL36 (37 aa).

It belongs to the bacterial ribosomal protein bL36 family.

The chain is Large ribosomal subunit protein bL36 from Sulfurimonas denitrificans (strain ATCC 33889 / DSM 1251) (Thiomicrospira denitrificans (strain ATCC 33889 / DSM 1251)).